Here is a 274-residue protein sequence, read N- to C-terminus: Dermonecrotic toxin SdSicTox-betaIIB1bii (274 aa).

Histidine 5 is a catalytic residue. Positions 25 and 27 each coordinate Mg(2+). Histidine 41 serves as the catalytic Nucleophile. 2 cysteine pairs are disulfide-bonded: cysteine 45-cysteine 51 and cysteine 47-cysteine 190. A Mg(2+)-binding site is contributed by aspartate 85.

The protein belongs to the arthropod phospholipase D family. Class II subfamily. Mg(2+) serves as cofactor. As to expression, expressed by the venom gland.

The protein resides in the secreted. The enzyme catalyses an N-(acyl)-sphingosylphosphocholine = an N-(acyl)-sphingosyl-1,3-cyclic phosphate + choline. The catalysed reaction is an N-(acyl)-sphingosylphosphoethanolamine = an N-(acyl)-sphingosyl-1,3-cyclic phosphate + ethanolamine. It catalyses the reaction a 1-acyl-sn-glycero-3-phosphocholine = a 1-acyl-sn-glycero-2,3-cyclic phosphate + choline. It carries out the reaction a 1-acyl-sn-glycero-3-phosphoethanolamine = a 1-acyl-sn-glycero-2,3-cyclic phosphate + ethanolamine. Its function is as follows. Dermonecrotic toxins cleave the phosphodiester linkage between the phosphate and headgroup of certain phospholipids (sphingolipid and lysolipid substrates), forming an alcohol (often choline) and a cyclic phosphate. This toxin acts on sphingomyelin (SM). It may also act on ceramide phosphoethanolamine (CPE), lysophosphatidylcholine (LPC) and lysophosphatidylethanolamine (LPE), but not on lysophosphatidylserine (LPS), and lysophosphatidylglycerol (LPG). It acts by transphosphatidylation, releasing exclusively cyclic phosphate products as second products. Induces dermonecrosis, hemolysis, increased vascular permeability, edema, inflammatory response, and platelet aggregation. The protein is Dermonecrotic toxin SdSicTox-betaIIB1bii of Sicarius cf. damarensis (strain GJB-2008) (Six-eyed sand spider).